Consider the following 283-residue polypeptide: Thymidylate synthase (283 aa).

Arg-22 contacts dUMP. The active-site Nucleophile is Cys-160. DUMP is bound by residues 180 to 183, Asn-191, and 221 to 223; these read RSCD and HIY. Asp-183 is a (6R)-5,10-methylene-5,6,7,8-tetrahydrofolate binding site. Ser-282 is a binding site for (6R)-5,10-methylene-5,6,7,8-tetrahydrofolate.

Belongs to the thymidylate synthase family. Bacterial-type ThyA subfamily. Homodimer.

The protein resides in the cytoplasm. The catalysed reaction is dUMP + (6R)-5,10-methylene-5,6,7,8-tetrahydrofolate = 7,8-dihydrofolate + dTMP. It functions in the pathway pyrimidine metabolism; dTTP biosynthesis. Catalyzes the reductive methylation of 2'-deoxyuridine-5'-monophosphate (dUMP) to 2'-deoxythymidine-5'-monophosphate (dTMP) while utilizing 5,10-methylenetetrahydrofolate (mTHF) as the methyl donor and reductant in the reaction, yielding dihydrofolate (DHF) as a by-product. This enzymatic reaction provides an intracellular de novo source of dTMP, an essential precursor for DNA biosynthesis. The sequence is that of Thymidylate synthase from Pseudoalteromonas translucida (strain TAC 125).